We begin with the raw amino-acid sequence, 549 residues long: Glucose-6-phosphate isomerase (549 aa).

Lys-80, Lys-228, and Lys-234 each carry N6-acetyllysine. Glu-355 serves as the catalytic Proton donor. Residues His-386 and Lys-514 contribute to the active site.

The protein belongs to the GPI family.

The protein localises to the cytoplasm. It catalyses the reaction alpha-D-glucose 6-phosphate = beta-D-fructose 6-phosphate. It participates in carbohydrate biosynthesis; gluconeogenesis. The protein operates within carbohydrate degradation; glycolysis; D-glyceraldehyde 3-phosphate and glycerone phosphate from D-glucose: step 2/4. Catalyzes the reversible isomerization of glucose-6-phosphate to fructose-6-phosphate. The protein is Glucose-6-phosphate isomerase of Escherichia coli O139:H28 (strain E24377A / ETEC).